The sequence spans 735 residues: MKPTTNGGLLASQSSSSFSFPRFRGQLPIIFSANNNQKKKNLPNPNVVTLCLHSHSNVSSSQIAVTRRAILVAPPLLAAAASLFLSISSAASAETSAESVALPPVATAPPPPPVEKEEAITSRIYDASVLGEPMAVGKDKKRVWEKLLNARIVYLGEAEQVPTRDDKVLELEIVRNLRKRCIESDRQLSLALEAFPLDLQEQLNQYMDKRMDGEVLKSYVSHWPVQRWQEYEPLLSYCRDNGVKLIACGTPLKVLRTVQAEGIRGLSESERKLYTPPAGSGFISGFTSFSRSSSLNMNPLTQIVPFGPSSYLSAQARVVEDHTMSQVIVQAVADGGGTGMLVVVTGANHVEYGSRGTGLPARISRKIPKKSQLVVLLDPERQFLRKEGESPVADFLWYSAARPCSRNCFDRAEIARVMNAAGRRRDALPQDIQKGLDLGLVSPEILQNFFDLEQYPLISELTQRFQGFRERLLADPKFLNRLAIEEAISITTTLVAQYEKRKENFFEELDYVITDSVRASVVDFFTVWLPAPTLSFISYADETIGPNSIDALRGLLGSIPDNAFQKSLGGQEWTLSLRIASVIIGGLKLAGVGVVSSFAAVGSSNALYAIRKFIKPELGVGEQAKRSPMLKTALVYGGYLGTSSNIRYQIIAGLIEHRISDELSSQPLLVNMISFVVRVANSYFGTQQWIDLARSTGLQTQKSVTTSNQIPEVASQSTVEYSTTEEASMDDLKNQ.

A chloroplast-targeting transit peptide spans 1–75 (MKPTTNGGLL…TRRAILVAPP (75 aa)). 2 helical membrane-spanning segments follow: residues 519-539 (ASVV…FISY) and 582-602 (VIIG…AAVG). Polar residues predominate over residues 714–726 (ASQSTVEYSTTEE). The interval 714–735 (ASQSTVEYSTTEEASMDDLKNQ) is disordered.

The protein belongs to the RETICULATA family.

Its subcellular location is the plastid. The protein resides in the chloroplast membrane. May play a role in leaf development. This Arabidopsis thaliana (Mouse-ear cress) protein is Protein RETICULATA-RELATED 5, chloroplastic.